The primary structure comprises 369 residues: Porin-like protein BUsg_347 (369 aa).

Residues Met-1–Ala-23 form the signal peptide.

This sequence belongs to the Gram-negative porin family. In terms of assembly, homotrimer.

The protein localises to the cell outer membrane. In terms of biological role, forms pores that allow passive diffusion of small molecules across the membrane. This chain is Porin-like protein BUsg_347, found in Buchnera aphidicola subsp. Schizaphis graminum (strain Sg).